Reading from the N-terminus, the 334-residue chain is Glucokinase-like protein XF_1460 (334 aa).

18–23 (ADVGGT) lines the ATP pocket.

It belongs to the bacterial glucokinase family.

The sequence is that of Glucokinase-like protein XF_1460 from Xylella fastidiosa (strain 9a5c).